The sequence spans 538 residues: Phosphoenolpyruvate carboxykinase (ATP) (538 aa).

Residues Arg64, Tyr206, and Lys212 each coordinate substrate. ATP is bound by residues Lys212, His231, and 247 to 255 (GLSGTGKTT). Mn(2+)-binding residues include Lys212 and His231. Asp268 contributes to the Mn(2+) binding site. ATP-binding positions include Glu296, Arg332, 448–449 (RI), and Thr454. Position 332 (Arg332) interacts with substrate.

Belongs to the phosphoenolpyruvate carboxykinase (ATP) family. In terms of assembly, monomer. Requires Mn(2+) as cofactor.

It localises to the cytoplasm. The enzyme catalyses oxaloacetate + ATP = phosphoenolpyruvate + ADP + CO2. Its pathway is carbohydrate biosynthesis; gluconeogenesis. In terms of biological role, involved in the gluconeogenesis. Catalyzes the conversion of oxaloacetate (OAA) to phosphoenolpyruvate (PEP) through direct phosphoryl transfer between the nucleoside triphosphate and OAA. The sequence is that of Phosphoenolpyruvate carboxykinase (ATP) from Enterobacter sp. (strain 638).